The sequence spans 67 residues: Large ribosomal subunit protein uL29 (67 aa).

This sequence belongs to the universal ribosomal protein uL29 family.

In Halorhodospira halophila (strain DSM 244 / SL1) (Ectothiorhodospira halophila (strain DSM 244 / SL1)), this protein is Large ribosomal subunit protein uL29.